The following is a 266-amino-acid chain: Type III pantothenate kinase (266 aa).

ATP is bound at residue 15–22; it reads EIGNSSTS. Substrate contacts are provided by residues Tyr-105 and 112–115; that span reads GADR. Asp-114 acts as the Proton acceptor in catalysis. Asp-135 serves as a coordination point for K(+). Position 138 (Thr-138) interacts with ATP. Position 191 (Thr-191) interacts with substrate.

The protein belongs to the type III pantothenate kinase family. In terms of assembly, homodimer. It depends on NH4(+) as a cofactor. K(+) is required as a cofactor.

It is found in the cytoplasm. It catalyses the reaction (R)-pantothenate + ATP = (R)-4'-phosphopantothenate + ADP + H(+). It functions in the pathway cofactor biosynthesis; coenzyme A biosynthesis; CoA from (R)-pantothenate: step 1/5. Its function is as follows. Catalyzes the phosphorylation of pantothenate (Pan), the first step in CoA biosynthesis. The protein is Type III pantothenate kinase of Chlorobium chlorochromatii (strain CaD3).